Reading from the N-terminus, the 598-residue chain is Beta-fructofuranosidase, insoluble isoenzyme 2 (598 aa).

The first 25 residues, 1-25 (MGVLGSRVAWAWLVQLLLLQQLAGA), serve as a signal peptide directing secretion. Residue D69 is part of the active site. N-linked (GlcNAc...) asparagine glycans are attached at residues N164, N189, and N348.

Belongs to the glycosyl hydrolase 32 family.

It localises to the secreted. The protein resides in the extracellular space. It is found in the apoplast. Its subcellular location is the cell wall. It catalyses the reaction Hydrolysis of terminal non-reducing beta-D-fructofuranoside residues in beta-D-fructofuranosides.. Functionally, may play a role in sucrose partitioning during seed development. The polypeptide is Beta-fructofuranosidase, insoluble isoenzyme 2 (CIN2) (Oryza sativa subsp. indica (Rice)).